The sequence spans 267 residues: Small ribosomal subunit protein uS3 (267 aa).

One can recognise a KH type-2 domain in the interval 39–114 (IRKYLETNLK…RVNINIVEIR (76 aa)). Low complexity predominate over residues 229 to 248 (ANNRGRGNNRGRGNSRQNGG). Positions 229 to 267 (ANNRGRGNNRGRGNSRQNGGRSRRPRQGQASTQGRGGNN) are disordered.

Belongs to the universal ribosomal protein uS3 family. As to quaternary structure, part of the 30S ribosomal subunit. Forms a tight complex with proteins S10 and S14.

In terms of biological role, binds the lower part of the 30S subunit head. Binds mRNA in the 70S ribosome, positioning it for translation. In Oenococcus oeni (strain ATCC BAA-331 / PSU-1), this protein is Small ribosomal subunit protein uS3.